A 447-amino-acid polypeptide reads, in one-letter code: Putative branched-chain amino acid carrier protein SAB1263c (447 aa).

The next 12 helical transmembrane spans lie at 6 to 26 (WVIG…IFPP), 40 to 60 (ILAF…VGAL), 74 to 94 (PKFS…LFAI), 114 to 134 (SSIA…YICL), 143 to 163 (IGSL…IKGY), 193 to 213 (GYLT…VNAV), 229 to 249 (LTAG…LGYI), 290 to 310 (LLGI…IGAV), 326 to 346 (FVLV…NAVI), 350 to 370 (IPVL…ILIA), 382 to 402 (IPVI…LGWL), and 417 to 437 (LEWF…GIFV).

This sequence belongs to the branched chain amino acid transporter family.

It is found in the cell membrane. Its function is as follows. Component of the transport system for branched-chain amino acids (leucine, isoleucine and valine), which is coupled to a proton motive force (Potential). Contributes to NaCl tolerance. The polypeptide is Putative branched-chain amino acid carrier protein SAB1263c (Staphylococcus aureus (strain bovine RF122 / ET3-1)).